The chain runs to 178 residues: Ribosome maturation factor RimM (178 aa).

The 75-residue stretch at 103–177 folds into the PRC barrel domain; the sequence is SKDEYYFFEI…KIVVKVPEWL (75 aa).

Belongs to the RimM family. In terms of assembly, binds ribosomal protein uS19.

Its subcellular location is the cytoplasm. An accessory protein needed during the final step in the assembly of 30S ribosomal subunit, possibly for assembly of the head region. Essential for efficient processing of 16S rRNA. May be needed both before and after RbfA during the maturation of 16S rRNA. It has affinity for free ribosomal 30S subunits but not for 70S ribosomes. The protein is Ribosome maturation factor RimM of Thermosipho africanus (strain TCF52B).